A 349-amino-acid chain; its full sequence is Protein RecA (349 aa).

Residue 66 to 73 coordinates ATP; sequence GPESSGKT.

Belongs to the RecA family.

The protein localises to the cytoplasm. Functionally, can catalyze the hydrolysis of ATP in the presence of single-stranded DNA, the ATP-dependent uptake of single-stranded DNA by duplex DNA, and the ATP-dependent hybridization of homologous single-stranded DNAs. It interacts with LexA causing its activation and leading to its autocatalytic cleavage. The sequence is that of Protein RecA from Psychrobacter sp. (strain PRwf-1).